The primary structure comprises 456 residues: Bifunctional protein GlmU (456 aa).

The pyrophosphorylase stretch occupies residues 1–228; it reads MPQNTLNIVI…SHLAAGVNNK (228 aa). UDP-N-acetyl-alpha-D-glucosamine is bound by residues 11–14, Lys-25, Gln-75, 80–81, 102–104, Gly-138, Glu-153, Asn-168, and Asn-226; these read LAAG, GT, and YGD. Asp-104 lines the Mg(2+) pocket. Position 226 (Asn-226) interacts with Mg(2+). Positions 229–249 are linker; it reads LQLTELERIFQTEQAQELLKA. The N-acetyltransferase stretch occupies residues 250 to 456; that stretch reads GVTLRDPARF…GWVRPEKDKQ (207 aa). Arg-332 and Lys-350 together coordinate UDP-N-acetyl-alpha-D-glucosamine. His-362 functions as the Proton acceptor in the catalytic mechanism. 2 residues coordinate UDP-N-acetyl-alpha-D-glucosamine: Tyr-365 and Asn-376. Acetyl-CoA-binding positions include Ala-379, 385–386, Ser-404, Ala-422, and Arg-439; that span reads NY.

The protein in the N-terminal section; belongs to the N-acetylglucosamine-1-phosphate uridyltransferase family. It in the C-terminal section; belongs to the transferase hexapeptide repeat family. In terms of assembly, homotrimer. It depends on Mg(2+) as a cofactor.

Its subcellular location is the cytoplasm. It carries out the reaction alpha-D-glucosamine 1-phosphate + acetyl-CoA = N-acetyl-alpha-D-glucosamine 1-phosphate + CoA + H(+). It catalyses the reaction N-acetyl-alpha-D-glucosamine 1-phosphate + UTP + H(+) = UDP-N-acetyl-alpha-D-glucosamine + diphosphate. It participates in nucleotide-sugar biosynthesis; UDP-N-acetyl-alpha-D-glucosamine biosynthesis; N-acetyl-alpha-D-glucosamine 1-phosphate from alpha-D-glucosamine 6-phosphate (route II): step 2/2. The protein operates within nucleotide-sugar biosynthesis; UDP-N-acetyl-alpha-D-glucosamine biosynthesis; UDP-N-acetyl-alpha-D-glucosamine from N-acetyl-alpha-D-glucosamine 1-phosphate: step 1/1. Its pathway is bacterial outer membrane biogenesis; LPS lipid A biosynthesis. Catalyzes the last two sequential reactions in the de novo biosynthetic pathway for UDP-N-acetylglucosamine (UDP-GlcNAc). The C-terminal domain catalyzes the transfer of acetyl group from acetyl coenzyme A to glucosamine-1-phosphate (GlcN-1-P) to produce N-acetylglucosamine-1-phosphate (GlcNAc-1-P), which is converted into UDP-GlcNAc by the transfer of uridine 5-monophosphate (from uridine 5-triphosphate), a reaction catalyzed by the N-terminal domain. The chain is Bifunctional protein GlmU from Neisseria meningitidis serogroup B (strain ATCC BAA-335 / MC58).